The chain runs to 426 residues: Adenylosuccinate synthetase (426 aa).

GTP is bound by residues 12–18 (GDEGKGK) and 40–42 (GHT). Asp13 serves as the catalytic Proton acceptor. Mg(2+) contacts are provided by Asp13 and Gly40. IMP contacts are provided by residues 13–16 (DEGK), 38–41 (NAGH), Thr128, Arg142, Gln223, Thr238, and Arg302. Residue His41 is the Proton donor of the active site. Substrate is bound at residue 298 to 304 (TTTGRAR). Residues Arg304, 330 to 332 (KLD), and 412 to 414 (SVG) each bind GTP.

The protein belongs to the adenylosuccinate synthetase family. In terms of assembly, homodimer. Requires Mg(2+) as cofactor.

The protein resides in the cytoplasm. The enzyme catalyses IMP + L-aspartate + GTP = N(6)-(1,2-dicarboxyethyl)-AMP + GDP + phosphate + 2 H(+). Its pathway is purine metabolism; AMP biosynthesis via de novo pathway; AMP from IMP: step 1/2. Functionally, plays an important role in the de novo pathway of purine nucleotide biosynthesis. Catalyzes the first committed step in the biosynthesis of AMP from IMP. The sequence is that of Adenylosuccinate synthetase from Thermoanaerobacter pseudethanolicus (strain ATCC 33223 / 39E) (Clostridium thermohydrosulfuricum).